Consider the following 3018-residue polypeptide: Genome polyprotein (3018 aa).

Serine 2 carries the N-acetylserine; by host modification. The segment at 2 to 23 (STLPKPQRKTKRNTNRRPMDVK) is interaction with STAT1. The segment at 2–58 (STLPKPQRKTKRNTNRRPMDVKFPGGGQIVGGVYLLPRKGPRLGVRATRKTSERSQP) is interaction with EIF2AK2/PKR. The interaction with DDX3X stretch occupies residues 2-59 (STLPKPQRKTKRNTNRRPMDVKFPGGGQIVGGVYLLPRKGPRLGVRATRKTSERSQPR). Positions 2–75 (STLPKPQRKT…PKARQPQGRH (74 aa)) are disordered. At 2–168 (STLPKPQRKT…EDGINYATGN (167 aa)) the chain is on the cytoplasmic side. 2 consecutive short sequence motifs (nuclear localization signal) follow at residues 5–13 (PKPQRKTKR) and 38–43 (PRKGPR). Positions 7 to 16 (PQRKTKRNTN) are enriched in basic residues. Phosphoserine; by host is present on serine 53. 2 short sequence motifs (nuclear localization signal) span residues 58–64 (PRGRRQP) and 66–71 (PKARQP). Residues serine 99 and serine 116 each carry the phosphoserine; by host modification. The interval 112–152 (PRRRSRNLGKVIDTLTCGFADLMWYIPVVGAPLGGVAAALA) is important for endoplasmic reticulum and mitochondrial localization. The segment at 122 to 173 (VIDTLTCGFADLMWYIPVVGAPLGGVAAALAHGVRAIEDGINYATGNLPGCS) is interaction with APOA2. Residues 164 to 167 (YATG) form an important for lipid droplets localization region. A helical membrane pass occupies residues 169-189 (LPGCSFSIFLLALLSCLTTPA). A propeptide spans 178 to 191 (LLALLSCLTTPASA) (ER anchor for the core protein, removed in mature form by host signal peptidase). Over 190 to 358 (SALTYGNSSG…FGGHWGILLA (169 aa)) the chain is Lumenal. N-linked (GlcNAc...) asparagine; by host glycosylation is found at asparagine 196, asparagine 209, asparagine 234, and asparagine 250. The interval 265 to 296 (LAGAAVVCSSLYIGDLCGSLFLAGQLFAFQPR) is important for fusion. The N-linked (GlcNAc...) asparagine; by host glycan is linked to asparagine 305. The chain crosses the membrane as a helical span at residues 359-379 (VAYFGMAGNWLKVLAVLFLFA). Topologically, residues 380–729 (GVEAQTMIAH…WEYIVLMFLV (350 aa)) are lumenal. Residues 385–411 (TMIAHGVSQTTSGFASLLTPGAKQNIQ) are HVR1. 3 N-linked (GlcNAc...) (high mannose) asparagine; by host glycosylation sites follow: asparagine 416, asparagine 422, and asparagine 429. 4 disulfide bridges follow: cysteine 428/cysteine 552, cysteine 451/cysteine 458, cysteine 486/cysteine 494, and cysteine 503/cysteine 508. Asparagine 447 carries an N-linked (GlcNAc...) asparagine; by host glycan. An HVR2 region spans residues 474–478 (KNVSG). N-linked (GlcNAc...) asparagine; by host glycosylation is present at asparagine 475. The interval 480 to 493 (SDDRPYCWHYAPRP) is CD81-binding 1. N-linked (GlcNAc...) asparagine; by host glycosylation occurs at asparagine 532. Residues 544-551 (PPTGGWFG) form a CD81-binding 2 region. N-linked (GlcNAc...) asparagine; by host glycosylation is present at asparagine 556. An intrachain disulfide couples cysteine 564 to cysteine 569. N-linked (GlcNAc...) asparagine; by host glycosylation is present at asparagine 577. 3 disulfide bridges follow: cysteine 585–cysteine 589, cysteine 601–cysteine 624, and cysteine 611–cysteine 648. N-linked (GlcNAc...) (high mannose) asparagine; by host glycans are attached at residues asparagine 627 and asparagine 649. A disulfide bridge connects residues cysteine 656 and cysteine 681. A PKR/eIF2-alpha phosphorylation homology domain (PePHD) region spans residues 664–675 (IEMSPLLFSTTQ). Residues 730-750 (LADARICTCLWLMLLISTVEA) form a helical membrane-spanning segment. Residues 751–761 (AVERLVVLNAA) are Lumenal-facing. The chain crosses the membrane as a helical span at residues 762–782 (SAAGTAGWWWAVLFLCCVWYV). Over 783-786 (KGRL) the chain is Cytoplasmic. The chain crosses the membrane as a helical span at residues 787–807 (VPACTYMALGMWPLLLTILAL). The Lumenal segment spans residues 808-817 (PPRAYAMDNE). The chain crosses the membrane as a helical span at residues 818 to 838 (QAASLGAVGLLVITIFSITPM). Residues 839–885 (YKKLLNCFIWWNQYFLARAEAMVHEWVPDLRVRGGRDSIILLTCLLH) are Cytoplasmic-facing. Residues 886 to 906 (PQLGFEVTKILLAVLAPLYIL) form a helical membrane-spanning segment. Over 907-932 (QYSLLKVPYFVRAHILLRACLLVRRL) the chain is Lumenal. Residues 907-1030 (QYSLLKVPYF…DMQRGGWKLL (124 aa)) form the Peptidase C18 domain. The segment at 908-1210 (YSLLKVPYFV…PVENMETTMR (303 aa)) is protease NS2-3. The S-palmitoyl cysteine; by host moiety is linked to residue cysteine 926. Residues 933 to 953 (AGGKYVQACLLRLGAWTGTFV) traverse the membrane as a helical segment. The interaction with host SCPS1 stretch occupies residues 933-953 (AGGKYVQACLLRLGAWTGTFV). Residues 954 to 1661 (YDHLAPLSDW…CMSADLEVIT (708 aa)) lie on the Cytoplasmic side of the membrane. Catalysis depends on for protease NS2 activity; shared with dimeric partner residues histidine 956, glutamate 976, and cysteine 997. Positions 1031 to 1212 (APITAYAQQT…ENMETTMRSP (182 aa)) constitute a Peptidase S29 domain. Catalysis depends on charge relay system; for serine protease NS3 activity residues histidine 1087 and aspartate 1111. Cysteine 1127 and cysteine 1129 together coordinate Zn(2+). The Charge relay system; for serine protease NS3 activity role is filled by serine 1169. Residues cysteine 1175 and histidine 1179 each contribute to the Zn(2+) site. 1234–1241 (APTGSGKS) is a binding site for ATP. Positions 1241 and 1321 each coordinate Mg(2+). The DECH box signature appears at 1320–1323 (DECH). The segment at 1490 to 1502 (QRRGRTGRGKPGV) is RNA-binding. The chain crosses the membrane as a helical span at residues 1662–1682 (STWVLVGGVLAALAAYCLSVG). The NS3-binding stretch occupies residues 1683 to 1694 (CVVICGRITLTG). At 1683-1809 (CVVICGRITL…SLTSPLRTSQ (127 aa)) the chain is on the cytoplasmic side. The chain crosses the membrane as a helical span at residues 1810-1830 (TLLLNILGGWIAAQVAPPPAS). The Lumenal segment spans residues 1831-1832 (TA). Residues 1833-1853 (FVVSGLAGAAVGSIRLGRVLV) traverse the membrane as a helical segment. Position 1854 (aspartate 1854) is a topological domain, cytoplasmic. The chain crosses the membrane as a helical span at residues 1855 to 1875 (VLAGYGAGVSGALVAFKIMSG). The Lumenal segment spans residues 1876–1885 (ECPSTEDMVN). Residues 1886-1906 (LLPALLSPGVALVGVVCAAIL) traverse the membrane as a helical segment. Residues 1907-1976 (RRHVGPAEGA…WVNEDTATPC (70 aa)) lie on the Cytoplasmic side of the membrane. Cysteine 1976 carries S-palmitoyl cysteine; by host lipidation. The stretch at 1977 to 2006 (ATSWLRDVWDWVCTVLSDFKVWLQAKLFPR) is an intramembrane region. Residues 2007–2997 (LPGIPFLSCQ…YHSVSQARPR (991 aa)) lie on the Cytoplasmic side of the membrane. 4 residues coordinate Zn(2+): cysteine 2015, cysteine 2033, cysteine 2035, and cysteine 2056. The tract at residues 2124–2212 (EFFTEVDGVR…ASSSANQLSA (89 aa)) is FKBP8-binding. Residues 2124–2337 (EFFTEVDGVR…PVPPPRRKRL (214 aa)) form a transcriptional activation region. Residues 2139–2143 (PPCKP) are interaction with non-structural protein 4A. The disordered stretch occupies residues 2192–2215 (RRLKKGSPPSLASSSANQLSAPSL). Residues 2193-2445 (RLKKGSPPSL…ALITPCAAEE (253 aa)) are interaction with host SKP2. Residues serine 2198, serine 2201, serine 2205, serine 2211, and serine 2214 each carry the phosphoserine; by host modification. A compositionally biased stretch (low complexity) spans 2198–2215 (SPPSLASSSANQLSAPSL). Positions 2214–2253 (SLRATCTTSQKHPEMELLQANLLWKHEMGSHIPRVQSENK) are ISDR. An interaction with EIF2AK2/PKR region spans residues 2214–2279 (SLRATCTTSQ…REISVSVECH (66 aa)). Positions 2253–2311 (KVVVLDSFELYPLEYEEREISVSVECHRQPRCKFPPVFPVWARPDNNPPFIQAWQMPGY) are NS4B-binding. The V3 stretch occupies residues 2304-2382 (QAWQMPGYEP…SITSPVPPDP (79 aa)). Residues 2327-2330 (APVP) carry the SH3-binding motif. Positions 2332-2340 (PRRKRLVHL) match the Nuclear localization signal motif. Lysine 2355 is covalently cross-linked (Glycyl lysine isopeptide (Lys-Gly) (interchain with G-Cter in ubiquitin)). Residues 2359 to 2417 (ESSNDPGPSSDSGLSITSPVPPDPTTPEDAGSEAESYSSMPPLEGEPGDPDLSSGSWST) form a disordered region. Over residues 2360-2373 (SSNDPGPSSDSGLS) the composition is skewed to low complexity. Phosphoserine; by host is present on residues serine 2456 and serine 2469. A RdRp catalytic domain is found at 2641–2759 (PMGFSYDTRC…ICESAGVQED (119 aa)). 3 residues coordinate Mg(2+): aspartate 2647, aspartate 2745, and aspartate 2746. The chain crosses the membrane as a helical span at residues 2998–3018 (FLLLGLLLLTVGVGIFLLPAR).

This sequence belongs to the hepacivirus polyprotein family. In terms of assembly, homooligomer. Interacts with E1 (via C-terminus). Interacts with the non-structural protein 5A. Interacts (via N-terminus) with host STAT1 (via SH2 domain); this interaction results in decreased STAT1 phosphorylation and ubiquitin-mediated proteasome-dependent STAT1 degradation, leading to decreased IFN-stimulated gene transcription. Interacts with host STAT3; this interaction constitutively activates STAT3. Interacts with host LTBR receptor. Interacts with host TNFRSF1A receptor and possibly induces apoptosis. Interacts with host HNRPK. Interacts with host YWHAE. Interacts with host UBE3A/E6AP. Interacts with host DDX3X. Interacts with host APOA2. Interacts with host RXRA protein. Interacts with host SP110 isoform 3/Sp110b; this interaction sequesters the transcriptional corepressor SP110 away from the nucleus. Interacts with host CREB3 nuclear transcription protein; this interaction triggers cell transformation. Interacts with host ACY3. Interacts with host C1QR1. Interacts with host RBM24; this interaction, which enhances the interaction of the mature core protein with 5'-UTR, may inhibit viral translation and favor replication. Interacts with host EIF2AK2/PKR; this interaction induces the autophosphorylation of EIF2AK2. Part of the viral assembly initiation complex composed of NS2, E1, E2, NS3, NS4A, NS5A and the mature core protein. As to quaternary structure, forms a heterodimer with envelope glycoprotein E2. Interacts with mature core protein. Interacts with protease NS2. The heterodimer E1/E2 interacts with host CLDN1; this interaction plays a role in viral entry into host cell. Interacts with host SPSB2 (via C-terminus). Part of the viral assembly initiation complex composed of NS2, E1, E2, NS3, NS4A, NS5A and the mature core protein. Interacts with host NEURL3; this interaction prevents E1 binding to glycoprotein E2. Forms a heterodimer with envelope glycoprotein E1. Interacts with host CD81 and SCARB1 receptors; these interactions play a role in viral entry into host cell. Interacts with host EIF2AK2/PKR; this interaction inhibits EIF2AK2 and probably allows the virus to evade the innate immune response. Interacts with host CD209/DC-SIGN and CLEC4M/DC-SIGNR. Interact with host SPCS1; this interaction is essential for viral particle assembly. Interacts with protease NS2. The heterodimer E1/E2 interacts with host CLDN1; this interaction plays a role in viral entry into host cell. Part of the viral assembly initiation complex composed of NS2, E1, E2, NS3, NS4A, NS5A and the mature core protein. Interacts with host SLC3A2/4F2hc; the interaction may facilitate viral entry into host cell. Interacts with human PLSCR1. In terms of assembly, homohexamer. Homoheptamer. Interacts with protease NS2. As to quaternary structure, homodimer. Interacts with host SPCS1; this interaction is essential for viral particle assembly. Interacts with envelope glycoprotein E1. Interacts with envelope glycoprotein E2. Interacts with viroporin p7. Interacts with serine protease/helicase NS3. Part of the replication complex composed of NS2, NS3, NS4A, NS4B, NS5A and the RNA-directed RNA polymerase embedded in an ER-derived membranous web. Part of the viral assembly initiation complex composed of NS2, E1, E2, NS3, NS4A, NS5A and the mature core protein. Interacts with protease NS2. Interacts with non-structural protein 4A; this interaction stabilizes the folding of NS3 serine protease. NS3-NS4A interaction is essential for NS3 activation and allows membrane anchorage of the latter. NS3/NS4A complex also prevents phosphorylation of host IRF3, thus preventing the establishment of dsRNA induced antiviral state. Interacts with host MAVS; this interaction leads to the cleavage and inhibition of host MAVS. Interacts with host TICAM1; this interaction leads to the cleavage and inhibition of host TICAM1. Interacts with host TANK-binding kinase/TBK1; this interaction results in the inhibition of the association between TBK1 and IRF3, which leads to the inhibition of IRF3 activation. Interacts with host RBM24. Part of the replication complex composed of NS2, NS3, NS4A, NS4B, NS5A and the RNA-directed RNA polymerase embedded in an ER-derived membranous web. Part of the viral assembly initiation complex composed of NS2, E1, E2, NS3, NS4A, NS5A and the mature core protein. In terms of assembly, interacts with NS3 serine protease; this interaction stabilizes the folding of NS3 serine protease. NS3-NS4A interaction is essential for NS3 activation and allows membrane anchorage of the latter. Interacts with non-structural protein 5A (via N-terminus). Part of the replication complex composed of NS2, NS3, NS4A, NS4B, NS5A and the RNA-directed RNA polymerase embedded in an ER-derived membranous web. Part of the viral assembly initiation complex composed of NS2, E1, E2, NS3, NS4A, NS5A and the mature core protein. As to quaternary structure, homomultimer. Interacts with non-structural protein NS5A. Interacts with host PLA2G4C; this interaction likely initiates the recruitment of replication complexes to lipid droplets. Interacts with host STING; this interaction disrupts the interaction between STING and TBK1 thereby suppressing the interferon signaling. Part of the replication complex composed of NS2, NS3, NS4A, NS4B, NS5A and the RNA-directed RNA polymerase embedded in an ER-derived membranous web. Monomer. Homodimer; dimerization is required for RNA-binding. Interacts with the mature core protein. Interacts (via N-terminus) with non-structural protein 4A. Interacts with non-structural protein 4B. Interacts (via region D2) with RNA-directed RNA polymerase. Part of the viral assembly initiation complex composed of NS2, E1, E2, NS3, NS4A, NS5A and the mature core protein. Part of the replication complex composed of NS2, NS3, NS4A, NS4B, NS5A and the RNA-directed RNA polymerase embedded in an ER-derived membranous web. Interacts with host GRB2. Interacts with host BIN1. Interacts with host PIK3R1. Interacts with host SRCAP. Interacts with host FKBP8. Interacts (via C-terminus) with host VAPB (via MSP domain). Interacts with host EIF2AK2/PKR; this interaction leads to disruption of EIF2AK2 dimerization by NS5A and probably allows the virus to evade the innate immune response. Interacts (via N-terminus) with host PACSIN2 (via N-terminus); this interaction attenuates protein kinase C alpha-mediated phosphorylation of PACSIN2 by disrupting the interaction between PACSIN2 and PRKCA. Interacts (via N-terminus) with host SRC kinase (via SH2 domain). Interacts with most Src-family kinases. Interacts with host IFI27 and SKP2; promotes the ubiquitin-mediated proteasomal degradation of NS5A. Interacts with host GPS2. Interacts with host TNFRSF21; this interaction allows the modulation by the virus of JNK, p38 MAPK, STAT3, and Akt signaling pathways in a DR6-dependent manner. Interacts (via N-terminus) with host CIDEB (via N-terminus); this interaction seems to regulate the association of HCV particles with APOE. Interacts with host CHKA/Choline Kinase-alpha; CHKA bridges host PI4KA and NS5A and potentiates NS5A-stimulated PI4KA activity, which then facilitates the targeting of the ternary complex to the ER for viral replication. Interacts with host SPSB2 (via C-terminus); this interaction targets NS5A for ubiquitination and degradation. Interacts with host RAB18; this interaction may promote the association of NS5A and other replicase components with lipid droplets. Interacts (via region D2) with host PPIA/CYPA; the interaction stimulates RNA-binding ability of NS5A and is dependent on the peptidyl-prolyl cis-trans isomerase activity of PPIA/CYPA. Interacts with host TRIM14; this interaction induces the degradation of NS5A. In terms of assembly, homooligomer. Interacts with non-structural protein 5A. Interacts with host VAPB. Interacts with host PRK2/PKN2. Interacts with host HNRNPA1 and SEPT6; these interactions facilitate viral replication. Part of the replication complex composed of NS2, NS3, NS4A, NS4B, NS5A and the RNA-directed RNA polymerase. Zn(2+) is required as a cofactor. The cofactor is Mg(2+). Post-translationally, specific enzymatic cleavages in vivo yield mature proteins. The structural proteins, core, E1, E2 and p7 are produced by proteolytic processing by host signal peptidases. The core protein precursor is synthesized as a 23 kDa, which is retained in the ER membrane through the hydrophobic signal peptide. Cleavage by the signal peptidase releases the 21 kDa mature core protein. The cleavage of the core protein precursor occurs between aminoacids 176 and 188 but the exact cleavage site is not known. Some degraded forms of the core protein appear as well during the course of infection. The other proteins (p7, NS2, NS3, NS4A, NS4B, NS5A and NS5B) are cleaved by the viral proteases. Autoprocessing between NS2 and NS3 is mediated by the NS2 cysteine protease catalytic domain and regulated by the NS3 N-terminal domain. In terms of processing, phosphorylated by host PKC and PKA. Ubiquitinated; mediated by UBE3A and leading to core protein subsequent proteasomal degradation. Post-translationally, highly N-glycosylated. In terms of processing, palmitoylation is required for NS2/3 autoprocessing and E2 recruitment to membranes. Palmitoylated. This modification may play a role in its polymerization or in protein-protein interactions. Post-translationally, phosphorylated on serines in a basal form termed p56. p58 is a hyperphosphorylated form of p56. p56 and p58 coexist in the cell in roughly equivalent amounts. Hyperphosphorylation is dependent on the presence of NS4A. Host CSNK1A1/CKI-alpha or RPS6KB1 kinases may be responsible for NS5A phosphorylation. In terms of processing, tyrosine phosphorylation is essential for the interaction with host SRC. The N-terminus is phosphorylated by host PRK2/PKN2.

The protein resides in the host endoplasmic reticulum membrane. It is found in the host mitochondrion membrane. It localises to the virion. Its subcellular location is the host cytoplasm. The protein localises to the host nucleus. The protein resides in the host lipid droplet. It is found in the virion membrane. It localises to the host mitochondrion. Its subcellular location is the host cell membrane. The protein localises to the host perinuclear region. The enzyme catalyses Hydrolysis of four peptide bonds in the viral precursor polyprotein, commonly with Asp or Glu in the P6 position, Cys or Thr in P1 and Ser or Ala in P1'.. The catalysed reaction is a ribonucleoside 5'-triphosphate + H2O = a ribonucleoside 5'-diphosphate + phosphate + H(+). It catalyses the reaction ATP + H2O = ADP + phosphate + H(+). It carries out the reaction RNA(n) + a ribonucleoside 5'-triphosphate = RNA(n+1) + diphosphate. With respect to regulation, inhibited by the antiviral drug hexamethylene amiloride. Inhibition by amantadine appears to be genotype-dependent. Also inhibited by long-alkyl-chain iminosugar derivatives. Its activity is regulated as follows. Activity is up-regulated by PRK2/PKN2-mediated phosphorylation. Packages viral RNA to form a viral nucleocapsid, and promotes virion budding. Participates in the viral particle production as a result of its interaction with the non-structural protein 5A. Binds RNA and may function as a RNA chaperone to induce the RNA structural rearrangements taking place during virus replication. Modulates viral translation initiation by interacting with viral IRES and 40S ribosomal subunit. Affects various cell signaling pathways, host immunity and lipid metabolism. Prevents the establishment of cellular antiviral state by blocking the interferon-alpha/beta (IFN-alpha/beta) and IFN-gamma signaling pathways and by blocking the formation of phosphorylated STAT1 and promoting ubiquitin-mediated proteasome-dependent degradation of STAT1. Activates STAT3 leading to cellular transformation. Regulates the activity of cellular genes, including c-myc and c-fos. May repress the promoter of p53, and sequester CREB3 and SP110 isoform 3/Sp110b in the cytoplasm. Represses cell cycle negative regulating factor CDKN1A, thereby interrupting an important check point of normal cell cycle regulation. Targets transcription factors involved in the regulation of inflammatory responses and in the immune response: suppresses TNF-induced NF-kappa-B activation, and activates AP-1. Binds to dendritic cells (DCs) via C1QR1, resulting in down-regulation of T-lymphocytes proliferation. Alters lipid metabolism by interacting with hepatocellular proteins involved in lipid accumulation and storage. Induces up-regulation of FAS promoter activity, and thereby contributes to the increased triglyceride accumulation in hepatocytes (steatosis). In terms of biological role, forms a heterodimer with envelope glycoprotein E2, which mediates virus attachment to the host cell, virion internalization through clathrin-dependent endocytosis and fusion with host membrane. Fusion with the host cell is most likely mediated by both E1 and E2, through conformational rearrangements of the heterodimer required for fusion rather than a classical class II fusion mechanism. E1/E2 heterodimer binds host apolipoproteins such as APOB and ApoE thereby forming a lipo-viro-particle (LVP). APOE associated to the LVP allows the initial virus attachment to cell surface receptors such as the heparan sulfate proteoglycans (HSPGs), syndecan-1 (SDC1), syndecan-1 (SDC2), the low-density lipoprotein receptor (LDLR) and scavenger receptor class B type I (SCARB1). The cholesterol transfer activity of SCARB1 allows E2 exposure and binding of E2 to SCARB1 and the tetraspanin CD81. E1/E2 heterodimer binding on CD81 activates the epithelial growth factor receptor (EGFR) signaling pathway. Diffusion of the complex E1-E2-EGFR-SCARB1-CD81 to the cell lateral membrane allows further interaction with Claudin 1 (CLDN1) and occludin (OCLN) to finally trigger HCV entry. Functionally, forms a heterodimer with envelope glycoprotein E1, which mediates virus attachment to the host cell, virion internalization through clathrin-dependent endocytosis and fusion with host membrane. Fusion with the host cell is most likely mediated by both E1 and E2, through conformational rearrangements of the heterodimer required for fusion rather than a classical class II fusion mechanism. The interaction between envelope glycoprotein E2 and host apolipoprotein E/APOE allows the proper assembly, maturation and infectivity of the viral particles. This interaction is probably promoted via the up-regulation of cellular autophagy by the virus. E1/E2 heterodimer binds host apolipoproteins such as APOB and APOE thereby forming a lipo-viro-particle (LVP). APOE associated to the LVP allows the initial virus attachment to cell surface receptors such as the heparan sulfate proteoglycans (HSPGs), syndecan-1 (SDC1), syndecan-1 (SDC2), the low-density lipoprotein receptor (LDLR) and scavenger receptor class B type I (SCARB1). The cholesterol transfer activity of SCARB1 allows E2 exposure and binding of E2 to SCARB1 and the tetraspanin CD81. E1/E2 heterodimer binding on CD81 activates the epithelial growth factor receptor (EGFR) signaling pathway. Diffusion of the complex E1-E2-EGFR-SCARB1-CD81 to the cell lateral membrane allows further interaction with Claudin 1 (CLDN1) and occludin (OCLN) to finally trigger HCV entry. Inhibits host EIF2AK2/PKR activation, preventing the establishment of an antiviral state. Viral ligand for CD209/DC-SIGN and CLEC4M/DC-SIGNR, which are respectively found on dendritic cells (DCs), and on liver sinusoidal endothelial cells and macrophage-like cells of lymph node sinuses. These interactions allow the capture of circulating HCV particles by these cells and subsequent facilitated transmission to permissive cells such as hepatocytes and lymphocyte subpopulations. The interaction between E2 and host amino acid transporter complex formed by SLC3A2 and SLC7A5/LAT1 may facilitate viral entry into host cell. Its function is as follows. Ion channel protein that acts as a viroporin and plays an essential role in the assembly, envelopment and secretion of viral particles. Regulates the host cell secretory pathway, which induces the intracellular retention of viral glycoproteins and favors assembly of viral particles. Creates a pore in acidic organelles and releases Ca(2+) and H(+) in the cytoplasm of infected cells, leading to a productive viral infection. High levels of cytoplasmic Ca(2+) may trigger membrane trafficking and transport of viral ER-associated proteins to viroplasms, sites of viral genome replication. This ionic imbalance induces the assembly of the inflammasome complex, which triggers the maturation of pro-IL-1beta into IL-1beta through the action of caspase-1. Targets also host mitochondria and induces mitochondrial depolarization. In addition of its role as a viroporin, acts as a lipid raft adhesion factor. Cysteine protease required for the proteolytic auto-cleavage between the non-structural proteins NS2 and NS3. The N-terminus of NS3 is required for the function of NS2 protease (active region NS2-3). Promotes the initiation of viral particle assembly by mediating the interaction between structural and non-structural proteins. In terms of biological role, displays three enzymatic activities: serine protease with a chymotrypsin-like fold, NTPase and RNA helicase. NS3 serine protease, in association with NS4A, is responsible for the cleavages of NS3-NS4A, NS4A-NS4B, NS4B-NS5A and NS5A-NS5B. The NS3/NS4A complex prevents phosphorylation of host IRF3, thus preventing the establishment of dsRNA induced antiviral state. The NS3/NS4A complex induces host amino acid transporter component SLC3A2, thus contributing to HCV propagation. NS3 RNA helicase binds to RNA and unwinds both dsDNA and dsRNA in the 3' to 5' direction, and likely resolves RNA complicated stable secondary structures in the template strand. Binds a single ATP and catalyzes the unzipping of a single base pair of dsRNA. Inhibits host antiviral proteins TBK1 and IRF3 thereby preventing the establishment of an antiviral state. Cleaves host MAVS/CARDIF thereby preventing the establishment of an antiviral state. Cleaves host TICAM1/TRIF, thereby disrupting TLR3 signaling and preventing the establishment of an antiviral state. Functionally, induces a specific membrane alteration that serves as a scaffold for the virus replication complex. This membrane alteration gives rise to the so-called ER-derived membranous web that contains the replication complex. NS4B self-interaction contributes to its function in membranous web formation. Promotes host TRIF protein degradation in a CASP8-dependent manner thereby inhibiting host TLR3-mediated interferon signaling. Disrupts the interaction between STING and TBK1 contributing to the inhibition of interferon signaling. Its function is as follows. Phosphorylated protein that is indispensable for viral replication and assembly. Both hypo- and hyperphosphorylated states are required for the viral life cycle. The hyperphosphorylated form of NS5A is an inhibitor of viral replication. Involved in RNA-binding and especially in binding to the viral genome. Zinc is essential for RNA-binding. Participates in the viral particle production as a result of its interaction with the mature viral core protein. Its interaction with host VAPB may target the viral replication complex to vesicles. Down-regulates viral IRES translation initiation. Mediates interferon resistance, presumably by interacting with and inhibiting host EIF2AK2/PKR. Prevents BIN1-induced apoptosis. Acts as a transcriptional activator of some host genes important for viral replication when localized in the nucleus. Via the interaction with host PACSIN2, modulates lipid droplet formation in order to promote virion assembly. Modulates TNFRSF21/DR6 signaling pathway for viral propagation. RNA-dependent RNA polymerase that performs primer-template recognition and RNA synthesis during viral replication. Initiates RNA transcription/replication at a flavin adenine dinucleotide (FAD), resulting in a 5'- FAD cap on viral RNAs. In this way, recognition of viral 5' RNA by host pattern recognition receptors can be bypassed, thereby evading activation of antiviral pathways. This is Genome polyprotein from Hepatitis C virus genotype 6a (isolate EUHK2) (HCV).